The following is a 2521-amino-acid chain: Piezo-type mechanosensitive ion channel component 1 (2521 aa).

The Cytoplasmic portion of the chain corresponds to 1 to 12; it reads MEPHVLGAVLYW. A helical membrane pass occupies residues 13–25; the sequence is LLLPCALLAACLL. Residues 26–28 lie on the Extracellular side of the membrane; sequence RFS. A helical transmembrane segment spans residues 29–44; that stretch reads GLSLVYLLFLLLLPWF. Over 45-58 the chain is Cytoplasmic; sequence PGPTRCGLQGHTGR. Residues 59–81 traverse the membrane as a helical segment; sequence LLRALLGLSLLFLVAHLALQICL. The Extracellular portion of the chain corresponds to 82 to 121; sequence HIVPRLDQLLGPSCSRWETLSRHIGVTRLDLKDIPNAIRL. The helical transmembrane segment at 122–138 threads the bilayer; it reads VAPDLGILVVSSVCLGI. Residues 139-194 lie on the Cytoplasmic side of the membrane; the sequence is CGRLARNTRQSPHPRELDDDERDVDASPTAGLQEAATLAPTRRSRLAARFRVTAHW. A helical transmembrane segment spans residues 195–214; the sequence is LLVAAGRVLAVTLLALAGIA. Residues 215–216 are Extracellular-facing; that stretch reads HP. Residues 217–236 traverse the membrane as a helical segment; it reads SALSSVYLLLFLALCTWWAC. The Cytoplasmic segment spans residues 237–247; the sequence is HFPISTRGFSR. A helical membrane pass occupies residues 248 to 268; that stretch reads LCVAVGCFGAGHLICLYCYQM. Topologically, residues 269–309 are extracellular; the sequence is PLAQALLPPAGIWARVLGLKDFVGPTNCSSPHALVLNTGLD. N-linked (GlcNAc...) asparagine glycosylation occurs at Asn-295. A helical membrane pass occupies residues 310-330; it reads WPVYASPGVLLLLCYATASLR. At 331-417 the chain is on the cytoplasmic side; sequence KLRAYRPSGQ…EASPLHSLGH (87 aa). The chain crosses the membrane as a helical span at residues 418 to 438; it reads LIMDQSYVCALIAMMVWSITY. Residues 439 to 440 are Extracellular-facing; it reads HS. Residues 441–456 traverse the membrane as a helical segment; it reads WLTFVLLLWACLIWTV. The Cytoplasmic segment spans residues 457 to 461; the sequence is RSRHQ. A helical transmembrane segment spans residues 462–484; that stretch reads LAMLCSPCILLYGMTLCCLRYVW. Over 485–512 the chain is Extracellular; sequence AMDLRPELPTTLGPVSLRQLGLEHTRYP. A helical transmembrane segment spans residues 513-530; sequence CLDLGAMLLYTLTFWLLL. Residues 531 to 574 are Cytoplasmic-facing; it reads RQFVKEKLLKWAESPAALTEVTVADTEPTRTQTLLQSLGELVKG. The helical transmembrane segment at 575–595 threads the bilayer; sequence VYAKYWIYVCAGMFIVVSFAG. Residue Arg-596 is a topological domain, extracellular. The helical transmembrane segment at 597 to 617 threads the bilayer; it reads LVVYKIVYMFLFLLCLTLFQV. Residues 618–627 are Cytoplasmic-facing; it reads YYSLWRKLLK. Residues 628 to 649 form a helical membrane-spanning segment; that stretch reads AFWWLVVAYTMLVLIAVYTFQF. The Extracellular segment spans residues 650–679; sequence QDFPAYWRNLTGFTDEQLGDLGLEQFSVSE. A helical transmembrane segment spans residues 680–696; the sequence is LFSSILVPGFFLLACIL. At 697 to 816 the chain is on the cytoplasmic side; the sequence is QLHYFHRPFM…RRLLELHVFK (120 aa). Thr-734 bears the Phosphothreonine mark. Positions 738 to 769 are disordered; sequence REEQQEHQQQQQEEEEEEEDSRDEGLGVATPH. A compositionally biased stretch (acidic residues) spans 749 to 759; sequence QEEEEEEEDSR. At Ser-758 the chain carries Phosphoserine. Residues 817 to 828 traverse the membrane as a helical segment; the sequence is LVALYTVWVALK. Residues 829–831 lie on the Extracellular side of the membrane; the sequence is EVS. The helical transmembrane segment at 832-845 threads the bilayer; sequence VMNLLLVVLWAFAL. Residues 846-859 are Cytoplasmic-facing; the sequence is PYPRFRPMASCLST. A helical membrane pass occupies residues 860–874; sequence VWTCVIIVCKMLYQL. Residues 875–926 are Extracellular-facing; sequence KVVNPQEYSSNCTEPFPNSTNLLPTEISQSLLYRGPVDPANWFGVRKGFPNL. A helical transmembrane segment spans residues 927-954; it reads GYIQNHLQVLLLLVFEAIVYRRQEHYRR. Residues 955-994 are Cytoplasmic-facing; it reads QHQLAPLPAQAVFASGTRQQLDQDLLGCLKYFINFFFYKF. The helical transmembrane segment at 995 to 1010 threads the bilayer; that stretch reads GLEICFLMAVNVIGQR. Topologically, residues 1011–1012 are extracellular; the sequence is MN. A helical transmembrane segment spans residues 1013–1028; it reads FLVTLHGCWLVAILTR. The Cytoplasmic segment spans residues 1029 to 1041; sequence RHRQAIARLWPNY. A helical membrane pass occupies residues 1042 to 1057; it reads CLFLALFLLYQYLLCL. Topologically, residues 1058 to 1096 are extracellular; that stretch reads GMPPALCIDYPWRWSRAVPMNSALIKWLYLPDFFRAPNS. A helical membrane pass occupies residues 1097–1118; it reads TNLISDFLLLLCASQQWQVFSA. The Cytoplasmic portion of the chain corresponds to 1119–1153; that stretch reads ERTEEWQRMAGVNTDRLEPLRGEPNPVPNFIHCRS. Residues 1154–1180 traverse the membrane as a helical segment; that stretch reads YLDMLKVAVFRYLFWLVLVVVFVTGAT. At 1181–1185 the chain is on the extracellular side; that stretch reads RISIF. A helical transmembrane segment spans residues 1186-1204; that stretch reads GLGYLLACFYLLLFGTALL. The Cytoplasmic segment spans residues 1205–1217; the sequence is QRDTRARLVLWDC. The helical transmembrane segment at 1218–1236 threads the bilayer; it reads LILYNVTVIISKNMLSLLA. Over 1237–1285 the chain is Extracellular; sequence CVFVEQMQTGFCWVIQLFSLVCTVKGYYDPKEMMDRDQDCLLPVEEAGI. A helical membrane pass occupies residues 1286-1302; that stretch reads IWDSVCFFFLLLQRRVF. Residues 1303–1656 lie on the Cytoplasmic side of the membrane; it reads LSHYYLHVRA…ELLLDRRLRI (354 aa). A coiled-coil region spans residues 1339 to 1368; sequence HRRIEEKSLAQLKRQMERIRAKQEKHRQGR. Disordered regions lie at residues 1356–1402, 1462–1498, and 1576–1630; these read RIRA…RRQW, RQQE…EAAA, and TLPG…DPGE. A compositionally biased stretch (low complexity) spans 1385-1398; it reads LEPGPDSPGGSSPP. Phosphoserine is present on residues Ser-1391 and Ser-1396. Phosphoserine is present on residues Ser-1636 and Ser-1646. The helical transmembrane segment at 1657 to 1700 threads the bilayer; the sequence is PELEEAELFAEGQGRALRLLRAVYQCVAAHSELLCYFIIILNHM. Over 1701–1704 the chain is Extracellular; the sequence is VTAS. A helical membrane pass occupies residues 1705–1720; the sequence is AGSLVLPVLVFLWAML. The Cytoplasmic segment spans residues 1721–1728; the sequence is SIPRPSKR. The chain crosses the membrane as a helical span at residues 1729-1747; that stretch reads FWMTAIVFTEIAVVVKYLF. The Extracellular portion of the chain corresponds to 1748–1779; the sequence is QFGFFPWNSHVVLRRYENKPYFPPRILGLEKT. The helical transmembrane segment at 1780 to 1801 threads the bilayer; sequence DGYIKYDLVQLMALFFHRSQLL. The Cytoplasmic segment spans residues 1802 to 1960; sequence CYGLWDHEED…HTKYRAATDV (159 aa). The segment covering 1811 to 1822 has biased composition (basic and acidic residues); sequence DSPSKEHDKSGE. Residues 1811 to 1921 form a disordered region; it reads DSPSKEHDKS…RPSRSGGRVR (111 aa). Thr-1854 is modified (phosphothreonine). Residues 1859 to 1868 show a composition bias toward basic and acidic residues; it reads VELRPRDTRR. A compositionally biased stretch (basic residues) spans 1869-1878; the sequence is ISLRFRRRKK. Residues 1890–1903 show a composition bias toward acidic residues; sequence EAEDREEEEGEEEK. Over residues 1904-1913 the composition is skewed to basic and acidic residues; that stretch reads EAPTGREKRP. The chain crosses the membrane as a helical span at residues 1961-1980; that stretch reads YALMFLADVVDFIIIIFGFW. The Extracellular segment spans residues 1981 to 2000; the sequence is AFGKHSAATDITSSLSDDQV. The helical transmembrane segment at 2001–2017 threads the bilayer; it reads PEAFLVMLLIQFSTMVV. Topologically, residues 2018–2031 are cytoplasmic; it reads DRALYLRKTVLGKL. The chain crosses the membrane as a helical span at residues 2032–2052; sequence AFQVALVLAIHLWMFFILPAV. At 2053–2060 the chain is on the extracellular side; that stretch reads TERMFNQN. Residues 2061–2076 traverse the membrane as a helical segment; the sequence is VVAQLWYFVKCIYFAL. Residues 2077-2176 are Cytoplasmic-facing; sequence SAYQIRCGYP…KKKIVKYGMG (100 aa). The helical transmembrane segment at 2177–2197 threads the bilayer; sequence GLIILFLIAIIWFPLLFMSLV. Residues 2198–2431 are Extracellular-facing; that stretch reads RSVVGVVNQP…IFSDKVSPPS (234 aa). Asn-2294 carries N-linked (GlcNAc...) asparagine glycosylation. Cys-2411 and Cys-2415 form a disulfide bridge. A helical transmembrane segment spans residues 2432-2452; that stretch reads LGFLAGYGIMGLYVSIVLVIG. Residues 2453 to 2521 are Cytoplasmic-facing; it reads KFVRGFFSEI…TMIKWTREKE (69 aa).

It belongs to the PIEZO (TC 1.A.75) family. In terms of assembly, homotrimer; the homotrimer forms a propeller-shaped Piezo channel with a cation-ion conducting pore. Heterotrimeric interaction may occur between PIEZO1 and PIEZO2. Interacts with PKD2. Interacts with STOML3. Interacts with TMC1, TMC2, PCDH15 and CIB2; the interaction may be part of the MET complex. Interacts with MDFIC (via C-terminus); the interaction prolongs Piezo channel inactivation. Interacts with MDFI (via C-terminus); the interaction prolongs Piezo channel inactivation. In terms of tissue distribution, expressed in numerous tissues. In normal brain, expressed exclusively in neurons, not in astrocytes. In Alzheimer disease brains, expressed in about half of the activated astrocytes located around classical senile plaques. In Parkinson disease substantia nigra, not detected in melanin-containing neurons nor in activated astrocytes. Expressed in erythrocytes (at protein level). Expressed in myoblasts (at protein level).

It localises to the endoplasmic reticulum membrane. It is found in the endoplasmic reticulum-Golgi intermediate compartment membrane. The protein localises to the cell membrane. Its subcellular location is the cell projection. The protein resides in the lamellipodium membrane. The enzyme catalyses K(+)(in) = K(+)(out). It catalyses the reaction Na(+)(in) = Na(+)(out). The catalysed reaction is Ca(2+)(in) = Ca(2+)(out). It carries out the reaction Mg(2+)(in) = Mg(2+)(out). Regulated by auxillary subunits MDFIC and MDFI. Down-regulated by phosphatidylserines exposed on the cell surface. Divalent ions decrease the single-channel permeability of K(+). Its function is as follows. Pore-forming subunit of the mechanosensitive non-specific cation Piezo channel required for rapidly adapting mechanically activated (MA) currents and has a key role in sensing touch and tactile pain. Piezo channels are homotrimeric three-blade propeller-shaped structures that utilize a cap-motion and plug-and-latch mechanism to gate their ion-conducting pathways. Generates currents characterized by a linear current-voltage relationship that are sensitive to ruthenium red and gadolinium. Conductance to monovalent alkali ions is highest for K(+), intermediate for Na(+) and lowest for Li(+). Divalent ions except for Mn(2+) permeate the channel but more slowly than the monovalent ions and they also reduce K(+) currents. Plays a key role in epithelial cell adhesion by maintaining integrin activation through R-Ras recruitment to the ER, most probably in its activated state, and subsequent stimulation of calpain signaling. In inner ear hair cells, PIEZO1/2 subunits may constitute part of the mechanotransducer (MET) non-selective cation channel complex where they may act as pore-forming ion-conducting component in the complex. In the kidney, may contribute to the detection of intraluminal pressure changes and to urine flow sensing. Acts as a shear-stress sensor that promotes endothelial cell organization and alignment in the direction of blood flow through calpain activation. Plays a key role in blood vessel formation and vascular structure in both development and adult physiology. Acts as a sensor of phosphatidylserine (PS) flipping at the plasma membrane and governs morphogenesis of muscle cells. In myoblasts, flippase-mediated PS enrichment at the inner leaflet of plasma membrane triggers channel activation and Ca2+ influx followed by Rho GTPases signal transduction, leading to assembly of cortical actomyosin fibers and myotube formation. This Homo sapiens (Human) protein is Piezo-type mechanosensitive ion channel component 1.